The primary structure comprises 208 residues: 3-demethoxyubiquinol 3-hydroxylase (208 aa).

Glutamate 57, glutamate 87, histidine 90, glutamate 139, glutamate 171, and histidine 174 together coordinate Fe cation.

The protein belongs to the COQ7 family. It depends on Fe cation as a cofactor.

It localises to the cell membrane. The catalysed reaction is a 5-methoxy-2-methyl-3-(all-trans-polyprenyl)benzene-1,4-diol + AH2 + O2 = a 3-demethylubiquinol + A + H2O. It functions in the pathway cofactor biosynthesis; ubiquinone biosynthesis. Functionally, catalyzes the hydroxylation of 2-nonaprenyl-3-methyl-6-methoxy-1,4-benzoquinol during ubiquinone biosynthesis. The protein is 3-demethoxyubiquinol 3-hydroxylase of Burkholderia lata (strain ATCC 17760 / DSM 23089 / LMG 22485 / NCIMB 9086 / R18194 / 383).